We begin with the raw amino-acid sequence, 286 residues long: Elongation factor Ts (286 aa).

The segment at 82-85 (TDFV) is involved in Mg(2+) ion dislocation from EF-Tu. The segment at 212 to 286 (VAAQTGQKVE…SPSKKGKKKK (75 aa)) is disordered. Positions 215–227 (QTGQKVEQPQAAQ) are enriched in polar residues. Positions 253 to 269 (ETDSPAAETTTEPPKTT) are enriched in low complexity.

Belongs to the EF-Ts family.

The protein localises to the cytoplasm. Its function is as follows. Associates with the EF-Tu.GDP complex and induces the exchange of GDP to GTP. It remains bound to the aminoacyl-tRNA.EF-Tu.GTP complex up to the GTP hydrolysis stage on the ribosome. The protein is Elongation factor Ts of Gloeothece citriformis (strain PCC 7424) (Cyanothece sp. (strain PCC 7424)).